Reading from the N-terminus, the 311-residue chain is tRNA-cytidine(32) 2-sulfurtransferase (311 aa).

Positions 58-63 match the PP-loop motif motif; sequence SGGKDS. Residues Cys-133, Cys-136, and Cys-224 each contribute to the [4Fe-4S] cluster site.

This sequence belongs to the TtcA family. Homodimer. The cofactor is Mg(2+). [4Fe-4S] cluster is required as a cofactor.

The protein localises to the cytoplasm. It carries out the reaction cytidine(32) in tRNA + S-sulfanyl-L-cysteinyl-[cysteine desulfurase] + AH2 + ATP = 2-thiocytidine(32) in tRNA + L-cysteinyl-[cysteine desulfurase] + A + AMP + diphosphate + H(+). It functions in the pathway tRNA modification. Its function is as follows. Catalyzes the ATP-dependent 2-thiolation of cytidine in position 32 of tRNA, to form 2-thiocytidine (s(2)C32). The sulfur atoms are provided by the cysteine/cysteine desulfurase (IscS) system. The sequence is that of tRNA-cytidine(32) 2-sulfurtransferase from Polaromonas sp. (strain JS666 / ATCC BAA-500).